We begin with the raw amino-acid sequence, 425 residues long: MATAEVLNIGRKLYEGKTKEVYELLDSPGRVLLQSKDQITAGNAARKNHLEGKAAISNKITSCIFQLLQEAGIKTAFTKKCGETAFIAPQCEMIPIEWVCRRIATGSFLKRNPGVKEGYRFYPPKVEMFFKDDANNDPQWSEEQLIAAKFCFAGLVIGQTEVDIMSHATQAIFEILEKSWLPQNCTLVDMKIEFGVDVTTKEIVLADVIDNDSWRLWPSGDRSQQKDKQSYRDLKEVTPEGLQMVKKNFEWVADRVELLLKSNSQCRVVVLMGSTSDLGHCEKIKKACGNFGIPCELRVTSAHKGPDETLRIKAEYEGDGIPTVFVAVAGRSNGLGPVMSGNTAYPVISCPPITADWGAQDVWSSLRLPSGIGCSTILSPEGSAQFAAQIFGLNNHLVWAKLRASKLNTWISLKQADKKIRECNL.

Position 2 is an N-acetylalanine (Ala2). The tract at residues 2 to 260 (ATAEVLNIGR…WVADRVELLL (259 aa)) is SAICAR synthetase domain. Tyr22 carries the phosphotyrosine modification. Ser27 carries the phosphoserine modification. Lys36 is modified (N6-acetyllysine). Ser107 carries the phosphoserine modification. Phosphothreonine is present on Thr238. An N6-acetyllysine modification is found at Lys247. A linker region spans residues 261 to 266 (KSNSQC). The interval 267–425 (RVVVLMGSTS…ADKKIRECNL (159 aa)) is AIR carboxylase domain. Phosphoserine is present on Ser274. Ser332 provides a ligand contact to CO2.

This sequence in the N-terminal section; belongs to the SAICAR synthetase family. The protein in the C-terminal section; belongs to the AIR carboxylase family. Class II subfamily. Homooctamer.

The enzyme catalyses 5-amino-1-(5-phospho-D-ribosyl)imidazole-4-carboxylate + L-aspartate + ATP = (2S)-2-[5-amino-1-(5-phospho-beta-D-ribosyl)imidazole-4-carboxamido]succinate + ADP + phosphate + 2 H(+). It carries out the reaction 5-amino-1-(5-phospho-D-ribosyl)imidazole-4-carboxylate + H(+) = 5-amino-1-(5-phospho-beta-D-ribosyl)imidazole + CO2. It participates in purine metabolism; IMP biosynthesis via de novo pathway; 5-amino-1-(5-phospho-D-ribosyl)imidazole-4-carboxamide from 5-amino-1-(5-phospho-D-ribosyl)imidazole-4-carboxylate: step 1/2. It functions in the pathway purine metabolism; IMP biosynthesis via de novo pathway; 5-amino-1-(5-phospho-D-ribosyl)imidazole-4-carboxylate from 5-amino-1-(5-phospho-D-ribosyl)imidazole (carboxylase route): step 1/1. Bifunctional phosphoribosylaminoimidazole carboxylase and phosphoribosylaminoimidazole succinocarboxamide synthetase catalyzing two reactions of the de novo purine biosynthetic pathway. This Rattus norvegicus (Rat) protein is Bifunctional phosphoribosylaminoimidazole carboxylase/phosphoribosylaminoimidazole succinocarboxamide synthetase.